The chain runs to 1057 residues: Carbamoyl phosphate synthase large chain (1057 aa).

Residues Met-1–Glu-401 form a carboxyphosphate synthetic domain region. ATP-binding residues include Arg-129, Arg-169, Gly-175, Gly-176, Lys-208, Ile-210, Glu-215, Gly-241, Ile-242, His-243, Gln-284, and Glu-298. The region spanning Arg-133–Val-327 is the ATP-grasp 1 domain. Residues Gln-284, Glu-298, and Asn-300 each coordinate Mg(2+). Mn(2+) is bound by residues Gln-284, Glu-298, and Asn-300. An oligomerization domain region spans residues Tyr-402–Ser-546. Residues Ile-547–Gly-929 are carbamoyl phosphate synthetic domain. The ATP-grasp 2 domain maps to Glu-671–Ile-861. 10 residues coordinate ATP: Arg-707, Arg-746, Leu-748, Glu-752, Gly-777, Val-778, His-779, Ser-780, Gln-820, and Glu-832. Mg(2+) is bound by residues Gln-820, Glu-832, and Asn-834. Mn(2+)-binding residues include Gln-820, Glu-832, and Asn-834. The 128-residue stretch at Val-930 to Met-1057 folds into the MGS-like domain. Positions Val-930–Met-1057 are allosteric domain.

The protein belongs to the CarB family. Composed of two chains; the small (or glutamine) chain promotes the hydrolysis of glutamine to ammonia, which is used by the large (or ammonia) chain to synthesize carbamoyl phosphate. Tetramer of heterodimers (alpha,beta)4. The cofactor is Mg(2+). It depends on Mn(2+) as a cofactor.

The catalysed reaction is hydrogencarbonate + L-glutamine + 2 ATP + H2O = carbamoyl phosphate + L-glutamate + 2 ADP + phosphate + 2 H(+). The enzyme catalyses hydrogencarbonate + NH4(+) + 2 ATP = carbamoyl phosphate + 2 ADP + phosphate + 2 H(+). The protein operates within amino-acid biosynthesis; L-arginine biosynthesis; carbamoyl phosphate from bicarbonate: step 1/1. It participates in pyrimidine metabolism; UMP biosynthesis via de novo pathway; (S)-dihydroorotate from bicarbonate: step 1/3. Large subunit of the glutamine-dependent carbamoyl phosphate synthetase (CPSase). CPSase catalyzes the formation of carbamoyl phosphate from the ammonia moiety of glutamine, carbonate, and phosphate donated by ATP, constituting the first step of 2 biosynthetic pathways, one leading to arginine and/or urea and the other to pyrimidine nucleotides. The large subunit (synthetase) binds the substrates ammonia (free or transferred from glutamine from the small subunit), hydrogencarbonate and ATP and carries out an ATP-coupled ligase reaction, activating hydrogencarbonate by forming carboxy phosphate which reacts with ammonia to form carbamoyl phosphate. The protein is Carbamoyl phosphate synthase large chain of Staphylococcus aureus (strain bovine RF122 / ET3-1).